Reading from the N-terminus, the 87-residue chain is Small ribosomal subunit protein uS15c (87 aa).

This sequence belongs to the universal ribosomal protein uS15 family. Part of the 30S ribosomal subunit.

The protein resides in the plastid. It localises to the chloroplast. In Oenothera biennis (German evening primrose), this protein is Small ribosomal subunit protein uS15c (rps15).